The chain runs to 142 residues: Transcriptional regulator MraZ (142 aa).

SpoVT-AbrB domains lie at 5–51 (ASSL…PRPV) and 77–120 (ASDV…DAAR).

It belongs to the MraZ family. In terms of assembly, forms oligomers.

Its subcellular location is the cytoplasm. The protein resides in the nucleoid. The chain is Transcriptional regulator MraZ from Herminiimonas arsenicoxydans.